Reading from the N-terminus, the 203-residue chain is Orotate phosphoribosyltransferase (203 aa).

5-phospho-alpha-D-ribose 1-diphosphate-binding positions include Arg-94, Lys-98, His-100, and 120 to 128 (EDLISTGGS). An orotate-binding site is contributed by Ser-124.

The protein belongs to the purine/pyrimidine phosphoribosyltransferase family. PyrE subfamily. In terms of assembly, homodimer. Mg(2+) serves as cofactor.

The catalysed reaction is orotidine 5'-phosphate + diphosphate = orotate + 5-phospho-alpha-D-ribose 1-diphosphate. Its pathway is pyrimidine metabolism; UMP biosynthesis via de novo pathway; UMP from orotate: step 1/2. Its function is as follows. Catalyzes the transfer of a ribosyl phosphate group from 5-phosphoribose 1-diphosphate to orotate, leading to the formation of orotidine monophosphate (OMP). This chain is Orotate phosphoribosyltransferase, found in Staphylococcus saprophyticus subsp. saprophyticus (strain ATCC 15305 / DSM 20229 / NCIMB 8711 / NCTC 7292 / S-41).